Here is a 654-residue protein sequence, read N- to C-terminus: Probable Xaa-Pro aminopeptidase P (654 aa).

Mn(2+) is bound by residues D449, D460, E558, and E572.

This sequence belongs to the peptidase M24B family. Requires Mn(2+) as cofactor.

It carries out the reaction Release of any N-terminal amino acid, including proline, that is linked to proline, even from a dipeptide or tripeptide.. Catalyzes the removal of a penultimate prolyl residue from the N-termini of peptides. This Aspergillus fumigatus (strain CBS 144.89 / FGSC A1163 / CEA10) (Neosartorya fumigata) protein is Probable Xaa-Pro aminopeptidase P (ampp).